Reading from the N-terminus, the 345-residue chain is Aspartate--ammonia ligase (345 aa).

This sequence belongs to the class-II aminoacyl-tRNA synthetase family. AsnA subfamily.

The protein localises to the cytoplasm. It carries out the reaction L-aspartate + NH4(+) + ATP = L-asparagine + AMP + diphosphate + H(+). It functions in the pathway amino-acid biosynthesis; L-asparagine biosynthesis; L-asparagine from L-aspartate (ammonia route): step 1/1. The chain is Aspartate--ammonia ligase from Parabacteroides distasonis (strain ATCC 8503 / DSM 20701 / CIP 104284 / JCM 5825 / NCTC 11152).